Reading from the N-terminus, the 349-residue chain is Transmembrane protein 255A (349 aa).

4 consecutive transmembrane segments (helical) span residues 30–50 (IYVT…GLAA), 57–77 (VTVG…LGII), 89–109 (LVAS…CAIV), and 226–246 (TILN…LGGF). The segment at 303 to 329 (PSSPPSGLSDEPQSASPSPSYMWSSSA) is disordered. The span at 316 to 329 (SASPSPSYMWSSSA) shows a compositional bias: low complexity.

This sequence belongs to the TMEM255 family.

Its subcellular location is the membrane. This Homo sapiens (Human) protein is Transmembrane protein 255A (TMEM255A).